A 1298-amino-acid polypeptide reads, in one-letter code: Phosphoribosylformylglycinamidine synthase (1298 aa).

Residues 303–327 are disordered; that stretch reads FPGAATGSGGEIRDEGATGRGAKPK. ATP-binding positions include 305–316, 384–386, and alanine 676; these read GAATGSGGEIRD and TGY. Residues aspartate 677, glutamate 716, asparagine 720, and aspartate 884 each contribute to the Mg(2+) site. Residue serine 886 participates in ATP binding. The Glutamine amidotransferase type-1 domain maps to 1045 to 1298; the sequence is VAVLREQGVN…MFRNARAWVN (254 aa). The Nucleophile role is filled by cysteine 1138. Residues histidine 1263 and glutamate 1265 contribute to the active site.

This sequence in the N-terminal section; belongs to the FGAMS family. Monomer.

The protein resides in the cytoplasm. The catalysed reaction is N(2)-formyl-N(1)-(5-phospho-beta-D-ribosyl)glycinamide + L-glutamine + ATP + H2O = 2-formamido-N(1)-(5-O-phospho-beta-D-ribosyl)acetamidine + L-glutamate + ADP + phosphate + H(+). It participates in purine metabolism; IMP biosynthesis via de novo pathway; 5-amino-1-(5-phospho-D-ribosyl)imidazole from N(2)-formyl-N(1)-(5-phospho-D-ribosyl)glycinamide: step 1/2. Its function is as follows. Phosphoribosylformylglycinamidine synthase involved in the purines biosynthetic pathway. Catalyzes the ATP-dependent conversion of formylglycinamide ribonucleotide (FGAR) and glutamine to yield formylglycinamidine ribonucleotide (FGAM) and glutamate. The chain is Phosphoribosylformylglycinamidine synthase from Pseudomonas syringae pv. syringae (strain B728a).